A 917-amino-acid chain; its full sequence is Low-density lipoprotein receptor-related protein 8 (917 aa).

An N-terminal signal peptide occupies residues 1-24 (MCRPALARLLLLQLLLLKLYLGKG). Residues 25–838 (AMKECDKDQF…GQGFDSTVTA (814 aa)) lie on the Extracellular side of the membrane. 5 LDL-receptor class A domains span residues 28–64 (ECDK…ADCP), 67–105 (TCAE…AACT), 108–146 (VCPA…AGCA), 148–184 (ACSP…KKCS), and 187–225 (TCSP…ERCG). Disulfide bonds link cysteine 29–cysteine 41, cysteine 36–cysteine 54, cysteine 48–cysteine 63, cysteine 68–cysteine 80, cysteine 75–cysteine 93, cysteine 87–cysteine 104, cysteine 109–cysteine 123, cysteine 116–cysteine 136, cysteine 130–cysteine 145, cysteine 149–cysteine 161, cysteine 156–cysteine 174, cysteine 168–cysteine 183, cysteine 188–cysteine 200, cysteine 195–cysteine 213, cysteine 207–cysteine 224, cysteine 241–cysteine 259, cysteine 253–cysteine 268, cysteine 273–cysteine 285, cysteine 280–cysteine 298, cysteine 292–cysteine 307, cysteine 313–cysteine 326, cysteine 321–cysteine 339, cysteine 333–cysteine 350, cysteine 355–cysteine 366, cysteine 362–cysteine 375, cysteine 377–cysteine 389, cysteine 395–cysteine 405, cysteine 401–cysteine 414, and cysteine 416–cysteine 429. Ca(2+)-binding residues include tryptophan 46, aspartate 49, aspartate 51, aspartate 53, aspartate 59, and glutamate 60. Asparagine 158 is a glycosylation site (N-linked (GlcNAc...) asparagine). An N-linked (GlcNAc...) asparagine glycan is attached at asparagine 196. 2 LDL-receptor class A domains span residues 272–308 (TCRP…AGCV) and 312–351 (ACES…KECG). The EGF-like 1 domain occupies 346 to 390 (PLKECGINECSLNNGGCSHICKDLKIGYECECPPGYKLLDKKTCG). The region spanning 391 to 430 (DIDECENPDACSQICINYKGDYKCECYEGYEMDTLSKNCK) is the EGF-like 2; calcium-binding domain. LDL-receptor class B repeat units follow at residues 476–522 (NRIY…DWVH), 523–565 (KNIY…DPTR), 566–609 (RFMY…DLLN), 610–652 (QRLY…AVFE), and 653–695 (DRVF…FHEL). N-linked (GlcNAc...) asparagine glycosylation occurs at asparagine 532. Asparagine 628 is a glycosylation site (N-linked (GlcNAc...) asparagine). The interval 754-813 (TTPATVEVPTTTTSHPAATSTVTVTGSANTTTAVIPRAVSEATTAIPSSHSTTSLLIDSE) is clustered O-linked oligosaccharides. Asparagine 782 and asparagine 820 each carry an N-linked (GlcNAc...) asparagine glycan. Residues 839–861 (AVIGIVIPVVVIGLLCMGGYLIW) form a helical membrane-spanning segment. Residues 862–917 (RNWKRKNTKSMNFDNPVYRKTTEEEDEDEIHIGRTAQIGHVYPARVALSLEDDGLP) are Cytoplasmic-facing.

It belongs to the LDLR family. In terms of assembly, homooligomer. As to expression, mainly in brain.

The protein localises to the cell membrane. Cell surface receptor for Reelin (RELN) and apolipoprotein E (apoE)-containing ligands. Also binds alpha2-macroglobulin. LRP8 participates in transmitting the extracellular Reelin signal to intracellular signaling processes, by binding to DAB1 on its cytoplasmic tail. Reelin acts via both the VLDL receptor (VLDLR) and LRP8 to regulate DAB1 tyrosine phosphorylation and microtubule function in neurons. LRP8 has higher affinity for Reelin than VLDLR. LRP8 is thus a key component of the Reelin pathway which governs neuronal layering of the forebrain during embryonic brain development. Not required for endocytic uptake of SEPP1 in the kidney which is mediated by LRP2. The sequence is that of Low-density lipoprotein receptor-related protein 8 (LRP8) from Gallus gallus (Chicken).